Consider the following 465-residue polypeptide: UDP-N-acetylmuramate--L-alanine ligase (465 aa).

112 to 118 (GTHGKTT) contacts ATP.

It belongs to the MurCDEF family.

Its subcellular location is the cytoplasm. It carries out the reaction UDP-N-acetyl-alpha-D-muramate + L-alanine + ATP = UDP-N-acetyl-alpha-D-muramoyl-L-alanine + ADP + phosphate + H(+). Its pathway is cell wall biogenesis; peptidoglycan biosynthesis. In terms of biological role, cell wall formation. The polypeptide is UDP-N-acetylmuramate--L-alanine ligase (Burkholderia ambifaria (strain ATCC BAA-244 / DSM 16087 / CCUG 44356 / LMG 19182 / AMMD) (Burkholderia cepacia (strain AMMD))).